The sequence spans 401 residues: MQKPPRTAAIIVAAGRGLRAGAGGPKQYRTLAGRPVIARALQPFCTHPEVFAVQPVTNPDDTATFNEAVAGLDFRPAVGGGATRQASVRAGLEALAELNPDIVLIHDAARPFVTPDLISRAIVAAGQTGAALPVIAVNDTVKQVDAEGCVVATPDRAQLRIAQTPQAFRFDVILDAHRRAARDGRDDFTDDAAIAEWAGLTVSTFEGDAANMKLTTPEDFSREESRLTAALGDIRTGTGYDVHAFGDGDHVWLCGLKVPHNRGFLAHSDGDVGLHALVDAILGALADGDIGSHFPPTDPQWKGAASDKFLKYAVDRVAARGGRIANLEVTMICERPKIGPLRDPMRQRIAEITGVPVSRVAVKATTSERLGFTGREEGIAATASATIRLPWSPWGAEGQAS.

The interval methionine 1 to isoleucine 234 is 2-C-methyl-D-erythritol 4-phosphate cytidylyltransferase. The segment at arginine 235 to serine 401 is 2-C-methyl-D-erythritol 2,4-cyclodiphosphate synthase. 2 residues coordinate a divalent metal cation: aspartate 241 and histidine 243. 4-CDP-2-C-methyl-D-erythritol 2-phosphate contacts are provided by residues aspartate 241–histidine 243 and histidine 267–serine 268. Histidine 275 contributes to the a divalent metal cation binding site. Residues aspartate 289–glycine 291, threonine 365–glutamate 368, phenylalanine 372, and arginine 375 each bind 4-CDP-2-C-methyl-D-erythritol 2-phosphate.

The protein in the N-terminal section; belongs to the IspD/TarI cytidylyltransferase family. IspD subfamily. This sequence in the C-terminal section; belongs to the IspF family. It depends on a divalent metal cation as a cofactor.

The enzyme catalyses 2-C-methyl-D-erythritol 4-phosphate + CTP + H(+) = 4-CDP-2-C-methyl-D-erythritol + diphosphate. It carries out the reaction 4-CDP-2-C-methyl-D-erythritol 2-phosphate = 2-C-methyl-D-erythritol 2,4-cyclic diphosphate + CMP. The protein operates within isoprenoid biosynthesis; isopentenyl diphosphate biosynthesis via DXP pathway; isopentenyl diphosphate from 1-deoxy-D-xylulose 5-phosphate: step 2/6. Its pathway is isoprenoid biosynthesis; isopentenyl diphosphate biosynthesis via DXP pathway; isopentenyl diphosphate from 1-deoxy-D-xylulose 5-phosphate: step 4/6. Functionally, bifunctional enzyme that catalyzes the formation of 4-diphosphocytidyl-2-C-methyl-D-erythritol from CTP and 2-C-methyl-D-erythritol 4-phosphate (MEP) (IspD), and catalyzes the conversion of 4-diphosphocytidyl-2-C-methyl-D-erythritol 2-phosphate (CDP-ME2P) to 2-C-methyl-D-erythritol 2,4-cyclodiphosphate (ME-CPP) with a corresponding release of cytidine 5-monophosphate (CMP) (IspF). The polypeptide is Bifunctional enzyme IspD/IspF (Rhodopseudomonas palustris (strain HaA2)).